The primary structure comprises 140 residues: UPF0134 protein MPN_094 (140 aa).

Belongs to the UPF0134 family.

The sequence is that of UPF0134 protein MPN_094 from Mycoplasma pneumoniae (strain ATCC 29342 / M129 / Subtype 1) (Mycoplasmoides pneumoniae).